The following is a 123-amino-acid chain: WAP four-disulfide core domain protein 5 (123 aa).

Positions 1–24 are cleaved as a signal peptide; sequence MRFWSLFLLVVLLAVGGQLPAASG. 2 consecutive WAP domains span residues 27–74 and 75–121; these read KGER…VPRI and LVKR…RDPA. 8 disulfides stabilise this stretch: Cys34-Cys62, Cys41-Cys66, Cys49-Cys61, Cys55-Cys70, Cys81-Cys109, Cys88-Cys113, Cys96-Cys108, and Cys102-Cys117.

The protein resides in the secreted. Putative acid-stable proteinase inhibitor. This Lemur catta (Ring-tailed lemur) protein is WAP four-disulfide core domain protein 5 (WFDC5).